Here is a 200-residue protein sequence, read N- to C-terminus: Translation machinery-associated protein 22 (200 aa).

The 72-residue stretch at Val106–His177 folds into the SUI1 domain.

The protein belongs to the DENR family. As to quaternary structure, interacts with the 40S ribosomal subunit.

Its subcellular location is the cytoplasm. In Coccidioides immitis (strain RS) (Valley fever fungus), this protein is Translation machinery-associated protein 22 (TMA22).